The following is a 475-amino-acid chain: UDP-N-acetylmuramate--L-alanine ligase (475 aa).

125–131 (GTHGKTS) contributes to the ATP binding site.

It belongs to the MurCDEF family.

It is found in the cytoplasm. The enzyme catalyses UDP-N-acetyl-alpha-D-muramate + L-alanine + ATP = UDP-N-acetyl-alpha-D-muramoyl-L-alanine + ADP + phosphate + H(+). It participates in cell wall biogenesis; peptidoglycan biosynthesis. In terms of biological role, cell wall formation. This Mycolicibacterium gilvum (strain PYR-GCK) (Mycobacterium gilvum (strain PYR-GCK)) protein is UDP-N-acetylmuramate--L-alanine ligase.